The sequence spans 60 residues: Transcriptional regulator Brz (60 aa).

The C4-type; atypical zinc-finger motif lies at 8 to 52; the sequence is CPRCGSDVKMGLPMGATVKSVTAASRQEPTSDTQKVRTVECRNDH.

This sequence belongs to the Brz family.

Activates transcription of bacteriorhodopsin (bop) and phytoene synthase (crtB1). May interact with DNA or RNA via the zinc finger motif. The chain is Transcriptional regulator Brz (brz) from Halobacterium salinarum (strain ATCC 29341 / DSM 671 / R1).